The following is a 589-amino-acid chain: Aspartate--tRNA ligase (589 aa).

Glu172 contributes to the L-aspartate binding site. The segment at 196–199 (QLFK) is aspartate. Position 218 (Arg218) interacts with L-aspartate. ATP-binding positions include 218 to 220 (RDE) and Gln227. His449 serves as a coordination point for L-aspartate. ATP is bound at residue Glu483. Arg490 contacts L-aspartate. 535–538 (GLDR) contributes to the ATP binding site.

The protein belongs to the class-II aminoacyl-tRNA synthetase family. Type 1 subfamily. Homodimer.

The protein localises to the cytoplasm. The enzyme catalyses tRNA(Asp) + L-aspartate + ATP = L-aspartyl-tRNA(Asp) + AMP + diphosphate. In terms of biological role, catalyzes the attachment of L-aspartate to tRNA(Asp) in a two-step reaction: L-aspartate is first activated by ATP to form Asp-AMP and then transferred to the acceptor end of tRNA(Asp). This chain is Aspartate--tRNA ligase, found in Actinobacillus succinogenes (strain ATCC 55618 / DSM 22257 / CCUG 43843 / 130Z).